We begin with the raw amino-acid sequence, 139 residues long: Arsenate reductase (139 aa).

Catalysis depends on nucleophile residues C10, C82, and C89. Cystine bridges form between C10–C82 and C82–C89.

This sequence belongs to the low molecular weight phosphotyrosine protein phosphatase family. Thioredoxin-coupled ArsC subfamily.

It is found in the cytoplasm. It catalyses the reaction arsenate + [thioredoxin]-dithiol + H(+) = arsenite + [thioredoxin]-disulfide + H2O. Its function is as follows. Catalyzes the reduction of arsenate [As(V)] to arsenite [As(III)]. This is Arsenate reductase from Oceanobacillus iheyensis (strain DSM 14371 / CIP 107618 / JCM 11309 / KCTC 3954 / HTE831).